Reading from the N-terminus, the 539-residue chain is Efflux pump roqT (539 aa).

Residues 1–25 form a disordered region; it reads MEKEVATDPLPQEIPSDAPDEGGSL. 12 consecutive transmembrane segments (helical) span residues 36–56, 108–128, 133–153, 160–180, 191–211, 233–253, 262–282, 305–325, 338–360, 362–384, 395–415, and 502–522; these read VSLT…VTII, LFLF…VGLI, IAGL…AQTV, VFTA…PPLG, WCFY…LFFF, IGSF…QWGG, RIIV…AVQI, WFAI…PIWF, VMNL…LVTI, GYYN…LLST, IGYQ…PFMV, and AFYV…ALEW.

It belongs to the major facilitator superfamily. TCR/Tet family.

It is found in the membrane. Its function is as follows. Efflux pump; part of the gene cluster that mediates the biosynthesis of the mycotoxins roquefortine C and meleagrin. The chain is Efflux pump roqT from Penicillium rubens (strain ATCC 28089 / DSM 1075 / NRRL 1951 / Wisconsin 54-1255) (Penicillium chrysogenum).